The primary structure comprises 127 residues: uncharacterized protein (127 aa).

The first 26 residues, 1-26, serve as a signal peptide directing secretion; it reads MKAIYALLAVVALALVAVSLFSQSDS.

This is an uncharacterized protein from Archaeoglobus fulgidus (strain ATCC 49558 / DSM 4304 / JCM 9628 / NBRC 100126 / VC-16).